The primary structure comprises 438 residues: Envelope glycoprotein M (438 aa).

The Intravirion segment spans residues Met1–Arg13. A helical membrane pass occupies residues Leu14–Ile34. Residues Gly35–Ser88 lie on the Virion surface side of the membrane. A helical membrane pass occupies residues Ala89–Ile109. Residues Arg110–Pro132 lie on the Intravirion side of the membrane. A helical transmembrane segment spans residues Pro133 to Leu153. The Virion surface segment spans residues Ser154–Met158. The chain crosses the membrane as a helical span at residues Val159 to Phe179. Topologically, residues Cys180–Ala212 are intravirion. Residues Val213–Leu233 form a helical membrane-spanning segment. Residues Gly234 to Thr248 are Virion surface-facing. Residues Val249–Leu269 form a helical membrane-spanning segment. The Intravirion portion of the chain corresponds to Val270 to Gln276. The helical transmembrane segment at Val277–His297 threads the bilayer. Over Asp298–Arg317 the chain is Virion surface. The chain crosses the membrane as a helical span at residues Val318–Val338. Residues Arg339–Lys438 are Intravirion-facing. The interval Glu395–Lys438 is disordered. Residues Pro425–Lys438 are compositionally biased toward pro residues.

Belongs to the herpesviridae glycoprotein M family. Interacts (via N-terminus) with gN (via N-terminus). The gM-gN heterodimer forms the gCII complex. Post-translationally, N-glycosylated. It is not O-glycosylated.

Its subcellular location is the virion membrane. The protein localises to the host Golgi apparatus. It localises to the host trans-Golgi network. It is found in the host endosome membrane. The protein resides in the host nucleus inner membrane. Functionally, envelope glycoprotein important for virion assembly and egress. Plays a role in the correct incorporation of gH-gL into virion membrane. Directs the glycoprotein N (gN) to the host trans-Golgi network. This Bovine herpesvirus 1.1 (strain Cooper) (BoHV-1) protein is Envelope glycoprotein M.